The following is a 288-amino-acid chain: Shikimate dehydrogenase (NADP(+)) (288 aa).

Shikimate contacts are provided by residues 15 to 17 (SKS) and Thr64. Lys68 (proton acceptor) is an active-site residue. Residue Glu83 participates in NADP(+) binding. Residues Asn92 and Asp117 each contribute to the shikimate site. NADP(+) is bound by residues 141–145 (GAGGA), 165–170 (NRTLSK), and Met232. Residue Tyr234 coordinates shikimate. Gly254 contacts NADP(+).

Belongs to the shikimate dehydrogenase family. Homodimer.

It catalyses the reaction shikimate + NADP(+) = 3-dehydroshikimate + NADPH + H(+). It functions in the pathway metabolic intermediate biosynthesis; chorismate biosynthesis; chorismate from D-erythrose 4-phosphate and phosphoenolpyruvate: step 4/7. Involved in the biosynthesis of the chorismate, which leads to the biosynthesis of aromatic amino acids. Catalyzes the reversible NADPH linked reduction of 3-dehydroshikimate (DHSA) to yield shikimate (SA). The chain is Shikimate dehydrogenase (NADP(+)) from Psychrobacter arcticus (strain DSM 17307 / VKM B-2377 / 273-4).